The following is a 412-amino-acid chain: Double C2-like domain-containing protein beta (412 aa).

Positions 1 to 36 (MTLRRRGEKATISIQEHMAIDVCPGPIRPIKQISDY) are negatively regulates targeting to plasma membrane. Positions 1 to 90 (MTLRRRGEKA…EDVDQLFGAY (90 aa)) are mediates interaction with DYNLT1. Residues 38–123 (PRFPRGLPPT…PDADGYESDD (86 aa)) are disordered. Residues 49–73 (APRASAPPDAPARSPAATAGPRSPS) show a composition bias toward low complexity. Residues 95–108 (GPSPGPSPVRPPAK) are compositionally biased toward pro residues. The segment covering 112–123 (DEPDADGYESDD) has biased composition (acidic residues). 2 C2 domains span residues 126–250 (ALGT…SICL) and 266–399 (ERGR…ERWH). Residues D157, D163, D218, D220, D297, D303, D357, D359, and D365 each coordinate Ca(2+). Residues 257–375 (DKAEDKSLEE…FIGGVVLGIN (119 aa)) are mediates interaction with STXBP3. S411 carries the post-translational modification Phosphoserine.

As to quaternary structure, interacts with STX4; the interaction is calcium-dependent, increased by insulin and glucose, and mediates vesicle fusion with plasma membrane in pancreatic cells and adipocytes. Interacts with STXBP3; the interaction is direct, occurs at the cell membrane and regulates glucose-stimulated insulin secretion. Interacts with cytoplasmic dynein light chain DYNLT1. Interacts with the SNARE (soluble N-ethylmaleimide-sensitive factor attached protein receptor) complex composed of SNAP25, STX1A and VAMP2; the interaction is calcium-dependent and competitive with SYT1. May interact with UNC13A; the interaction mediates targeting to the plasma membrane. It depends on Ca(2+) as a cofactor. In terms of tissue distribution, expressed in brain; highly enriched in neurons.

It localises to the cytoplasm. The protein localises to the cytoplasmic granule. Its subcellular location is the cell membrane. Its function is as follows. Calcium sensor which positively regulates SNARE-dependent fusion of vesicles with membranes. Binds phospholipids in a calcium-dependent manner and may act at the priming stage of fusion by modifying membrane curvature to stimulate fusion. Involved in calcium-triggered exocytosis in chromaffin cells and calcium-dependent spontaneous release of neurotransmitter in absence of action potentials in neuronal cells. Involved both in glucose-stimulated insulin secretion in pancreatic cells and insulin-dependent GLUT4 transport to the plasma membrane in adipocytes. The polypeptide is Double C2-like domain-containing protein beta (Doc2b) (Rattus norvegicus (Rat)).